The following is a 185-amino-acid chain: Ribonuclease HII (185 aa).

Residues 1–185 (MIILGIDEAG…KSYKPIQLLL (185 aa)) form the RNase H type-2 domain. Residues D7, E8, and D99 each coordinate a divalent metal cation.

The protein belongs to the RNase HII family. The cofactor is Mn(2+). Mg(2+) serves as cofactor.

Its subcellular location is the cytoplasm. It carries out the reaction Endonucleolytic cleavage to 5'-phosphomonoester.. In terms of biological role, endonuclease that specifically degrades the RNA of RNA-DNA hybrids. The protein is Ribonuclease HII of Francisella tularensis subsp. novicida (strain U112).